Consider the following 678-residue polypeptide: Penicillin-binding protein activator LpoA (678 aa).

The signal sequence occupies residues 1 to 26; sequence MVPSTFSRLKAARCLPVVLAALIFAG. Cys-27 carries the N-palmitoyl cysteine lipid modification. Cys-27 carries S-diacylglycerol cysteine lipidation. 2 disordered regions span residues 302-340 and 496-528; these read DVAEQPQPQTVDGVASPAQASVSDLTGDQPAAQPVPVSA and ALTGTPITPRATTDSGMTTNNPTLQTTPTDDQF. Composition is skewed to low complexity over residues 330 to 340 and 513 to 528; these read QPAAQPVPVSA and TTNNPTLQTTPTDDQF.

Belongs to the LpoA family. In terms of assembly, interacts with PBP1a.

It localises to the cell outer membrane. Functionally, regulator of peptidoglycan synthesis that is essential for the function of penicillin-binding protein 1A (PBP1a). This Shigella sonnei (strain Ss046) protein is Penicillin-binding protein activator LpoA.